A 212-amino-acid polypeptide reads, in one-letter code: Thiamine-phosphate synthase (212 aa).

4-amino-2-methyl-5-(diphosphooxymethyl)pyrimidine-binding positions include 35–39 (QLRRK) and Asn-67. Asp-68 and Asp-87 together coordinate Mg(2+). Residue Ser-106 participates in 4-amino-2-methyl-5-(diphosphooxymethyl)pyrimidine binding. 132 to 134 (TGS) contributes to the 2-[(2R,5Z)-2-carboxy-4-methylthiazol-5(2H)-ylidene]ethyl phosphate binding site. Lys-135 is a binding site for 4-amino-2-methyl-5-(diphosphooxymethyl)pyrimidine. 2-[(2R,5Z)-2-carboxy-4-methylthiazol-5(2H)-ylidene]ethyl phosphate-binding positions include Gly-163 and 183-184 (IS).

It belongs to the thiamine-phosphate synthase family. Mg(2+) serves as cofactor.

It carries out the reaction 2-[(2R,5Z)-2-carboxy-4-methylthiazol-5(2H)-ylidene]ethyl phosphate + 4-amino-2-methyl-5-(diphosphooxymethyl)pyrimidine + 2 H(+) = thiamine phosphate + CO2 + diphosphate. The enzyme catalyses 2-(2-carboxy-4-methylthiazol-5-yl)ethyl phosphate + 4-amino-2-methyl-5-(diphosphooxymethyl)pyrimidine + 2 H(+) = thiamine phosphate + CO2 + diphosphate. The catalysed reaction is 4-methyl-5-(2-phosphooxyethyl)-thiazole + 4-amino-2-methyl-5-(diphosphooxymethyl)pyrimidine + H(+) = thiamine phosphate + diphosphate. It participates in cofactor biosynthesis; thiamine diphosphate biosynthesis; thiamine phosphate from 4-amino-2-methyl-5-diphosphomethylpyrimidine and 4-methyl-5-(2-phosphoethyl)-thiazole: step 1/1. Functionally, condenses 4-methyl-5-(beta-hydroxyethyl)thiazole monophosphate (THZ-P) and 2-methyl-4-amino-5-hydroxymethyl pyrimidine pyrophosphate (HMP-PP) to form thiamine monophosphate (TMP). The chain is Thiamine-phosphate synthase from Chlorobium luteolum (strain DSM 273 / BCRC 81028 / 2530) (Pelodictyon luteolum).